The following is a 229-amino-acid chain: Endonuclease V (229 aa).

Positions 46 and 114 each coordinate Mg(2+).

Belongs to the endonuclease V family. Mg(2+) serves as cofactor.

It is found in the cytoplasm. It carries out the reaction Endonucleolytic cleavage at apurinic or apyrimidinic sites to products with a 5'-phosphate.. Its function is as follows. DNA repair enzyme involved in the repair of deaminated bases. Selectively cleaves double-stranded DNA at the second phosphodiester bond 3' to a deoxyinosine leaving behind the intact lesion on the nicked DNA. The chain is Endonuclease V from Streptomyces avermitilis (strain ATCC 31267 / DSM 46492 / JCM 5070 / NBRC 14893 / NCIMB 12804 / NRRL 8165 / MA-4680).